A 617-amino-acid chain; its full sequence is Probable Xaa-Pro aminopeptidase P (617 aa).

The Mn(2+) site is built by Asp-414, Asp-425, Glu-523, and Glu-537.

Belongs to the peptidase M24B family. Requires Mn(2+) as cofactor.

The enzyme catalyses Release of any N-terminal amino acid, including proline, that is linked to proline, even from a dipeptide or tripeptide.. In terms of biological role, catalyzes the removal of a penultimate prolyl residue from the N-termini of peptides. The polypeptide is Probable Xaa-Pro aminopeptidase P (AMPP) (Ajellomyces capsulatus (strain NAm1 / WU24) (Darling's disease fungus)).